The primary structure comprises 132 residues: S-protein homolog 19 (132 aa).

The first 26 residues, 1 to 26, serve as a signal peptide directing secretion; sequence MSGSLAFHIIMSVTFMVFFFGGLCEA. N-linked (GlcNAc...) asparagine glycosylation is present at Asn87.

It belongs to the plant self-incompatibility (S1) protein family.

The protein localises to the secreted. This chain is S-protein homolog 19, found in Arabidopsis thaliana (Mouse-ear cress).